Reading from the N-terminus, the 293-residue chain is Aminodeoxychorismate lyase (293 aa).

Lysine 146 carries the post-translational modification N6-(pyridoxal phosphate)lysine.

The protein belongs to the class-IV pyridoxal-phosphate-dependent aminotransferase family. Homodimer. It depends on pyridoxal 5'-phosphate as a cofactor.

It carries out the reaction 4-amino-4-deoxychorismate = 4-aminobenzoate + pyruvate + H(+). It participates in cofactor biosynthesis; tetrahydrofolate biosynthesis; 4-aminobenzoate from chorismate: step 2/2. Functionally, involved in the biosynthesis of p-aminobenzoate (PABA), a precursor of tetrahydrofolate. Converts 4-amino-4-deoxychorismate into 4-aminobenzoate (PABA) and pyruvate. The chain is Aminodeoxychorismate lyase from Bacillus subtilis (strain 168).